A 201-amino-acid polypeptide reads, in one-letter code: Aminoglycoside N(6')-acetyltransferase type 1 (201 aa).

The 168-residue stretch at 25 to 192 folds into the N-acetyltransferase domain; the sequence is VTLRLMTEHD…PAVYMVQTRQ (168 aa). Residues W51 and D154 each contribute to the substrate site. An acetyl-CoA-binding site is contributed by N159.

Homodimer.

It carries out the reaction kanamycin B + acetyl-CoA = N(6')-acetylkanamycin B + CoA + H(+). Catalyzes the transfer of an acetyl group from acetyl-CoA to the 6'-amino group of aminoglycoside molecules conferring resistance to antibiotics containing the purpurosamine ring including amikacin and kanamycin. The polypeptide is Aminoglycoside N(6')-acetyltransferase type 1 (aacA4) (Serratia marcescens).